The primary structure comprises 153 residues: Nitrogen regulatory protein (153 aa).

In terms of domain architecture, PTS EIIA type-2 spans 5-148; sequence DLVAPEAILP…QAIYSVLALP (144 aa). H66 acts as the Tele-phosphohistidine intermediate in catalysis.

The protein resides in the cytoplasm. Functionally, seems to have a role in regulating nitrogen assimilation. The polypeptide is Nitrogen regulatory protein (ptsN) (Bradyrhizobium diazoefficiens (strain JCM 10833 / BCRC 13528 / IAM 13628 / NBRC 14792 / USDA 110)).